Here is a 317-residue protein sequence, read N- to C-terminus: Protease 7 (317 aa).

The signal sequence occupies residues 1-20 (MRAKLLGIVLTTPIAISSFA). Residues 21–31 (STETLSFTPDN) are Periplasmic-facing. Residues 32 to 41 (INADISLGTL) form a beta stranded membrane-spanning segment. The Extracellular segment spans residues 42–69 (SGKTKERVYLAEEGGRKVSQLDWKFNNA). The chain crosses the membrane as a beta stranded span at residues 70–78 (AIIKGAINW). Topologically, residues 79–83 (DLMPQ) are periplasmic. The beta stranded transmembrane segment at 84–92 (ISIGAAGWT) threads the bilayer. Over 93–130 (TLGSRGGNMVDQDWMDSSNPGTWTDESRHPDTQLNYAN) the chain is Extracellular. Active-site residues include Asp-103 and Asp-105. The chain crosses the membrane as a beta stranded span at residues 131-140 (EFDLNIKGWL). At 141–145 (LNEPN) the chain is on the periplasmic side. Residues 146 to 156 (YRLGLMAGYQE) traverse the membrane as a beta stranded segment. Topologically, residues 157-197 (SRYSFTARGGSYIYSSEEGFRDDIGSFPNGERAIGYKQRFK) are extracellular. A beta stranded membrane pass occupies residues 198–209 (MPYIGLTGSYRY). The Periplasmic segment spans residues 210 to 211 (ED). A beta stranded transmembrane segment spans residues 212–221 (FELGGTFKYS). Over 222–250 (GWVEASDNDEHYDPGKRITYRSKVKDQNY) the chain is Extracellular. Residues Asp-230 and His-232 contribute to the active site. Residues 251 to 261 (YSVSVNAGYYV) form a beta stranded membrane-spanning segment. Residues 262–264 (TPN) lie on the Periplasmic side of the membrane. The chain crosses the membrane as a beta stranded span at residues 265 to 274 (AKVYVEGTWN). At 275 to 306 (RVTNKKGNTSLYDHNDNTSDYSKNGAGIENYN) the chain is on the extracellular side. A beta stranded membrane pass occupies residues 307–316 (FITTAGLKYT). Phe-317 is a topological domain (periplasmic).

It belongs to the peptidase A26 family. As to quaternary structure, homopentamer.

The protein resides in the cell outer membrane. It catalyses the reaction Has a virtual requirement for Arg in the P1 position and a slightly less stringent preference for this residue in the P1' position, which can also contain Lys, Gly or Val.. Its activity is regulated as follows. Inhibited by zinc. In terms of biological role, protease that can cleave T7 RNA polymerase, ferric enterobactin receptor protein (FEP), antimicrobial peptide protamine and other proteins. This protease has a specificity for paired basic residues. This is Protease 7 (ompT) from Escherichia coli O157:H7.